Consider the following 439-residue polypeptide: Actin-related protein 3 (439 aa).

The disordered stretch occupies residues 40–71 (PSAGTGGSGSGRPAVANKPSFLTGGAGPGGHL).

This sequence belongs to the actin family. ARP3 subfamily. In terms of assembly, component of the Arp2/3 complex composed.

The protein resides in the cytoplasm. It localises to the cytoskeleton. In terms of biological role, functions as ATP-binding component of the Arp2/3 complex which is involved in regulation of actin polymerization and together with an activating nucleation-promoting factor (NPF) mediates the formation of branched actin networks. Seems to contact the pointed end of the daughter actin filament. This chain is Actin-related protein 3 (arp-3), found in Neurospora crassa (strain ATCC 24698 / 74-OR23-1A / CBS 708.71 / DSM 1257 / FGSC 987).